A 176-amino-acid polypeptide reads, in one-letter code: NAD(P)H-quinone oxidoreductase subunit 6, chloroplastic (176 aa).

Transmembrane regions (helical) follow at residues I10 to T30, I33 to L53, V60 to F80, I95 to I115, and F152 to T172.

Belongs to the complex I subunit 6 family. In terms of assembly, NDH is composed of at least 16 different subunits, 5 of which are encoded in the nucleus.

It is found in the plastid. The protein resides in the chloroplast thylakoid membrane. The catalysed reaction is a plastoquinone + NADH + (n+1) H(+)(in) = a plastoquinol + NAD(+) + n H(+)(out). The enzyme catalyses a plastoquinone + NADPH + (n+1) H(+)(in) = a plastoquinol + NADP(+) + n H(+)(out). NDH shuttles electrons from NAD(P)H:plastoquinone, via FMN and iron-sulfur (Fe-S) centers, to quinones in the photosynthetic chain and possibly in a chloroplast respiratory chain. The immediate electron acceptor for the enzyme in this species is believed to be plastoquinone. Couples the redox reaction to proton translocation, and thus conserves the redox energy in a proton gradient. This Hordeum vulgare (Barley) protein is NAD(P)H-quinone oxidoreductase subunit 6, chloroplastic (ndhG).